A 493-amino-acid polypeptide reads, in one-letter code: GTPase Der (493 aa).

2 consecutive EngA-type G domains span residues 3–166 and 206–379; these read PVVA…AEAL and IKLA…KSAT. GTP contacts are provided by residues 9 to 16, 56 to 60, 118 to 121, 212 to 219, 259 to 263, and 324 to 327; these read GRPNVGKS, DTGGI, NKVD, DTAGV, and NKWD. The KH-like domain maps to 380 to 464; it reads TRVGTSVLTR…PIRIQFQNSE (85 aa).

This sequence belongs to the TRAFAC class TrmE-Era-EngA-EngB-Septin-like GTPase superfamily. EngA (Der) GTPase family. As to quaternary structure, associates with the 50S ribosomal subunit.

In terms of biological role, GTPase that plays an essential role in the late steps of ribosome biogenesis. This is GTPase Der from Vibrio atlanticus (strain LGP32) (Vibrio splendidus (strain Mel32)).